The sequence spans 307 residues: UDP-3-O-acyl-N-acetylglucosamine deacetylase (307 aa).

Residues histidine 78, histidine 235, and aspartate 239 each coordinate Zn(2+). Histidine 262 serves as the catalytic Proton donor.

It belongs to the LpxC family. It depends on Zn(2+) as a cofactor.

The catalysed reaction is a UDP-3-O-[(3R)-3-hydroxyacyl]-N-acetyl-alpha-D-glucosamine + H2O = a UDP-3-O-[(3R)-3-hydroxyacyl]-alpha-D-glucosamine + acetate. Its pathway is glycolipid biosynthesis; lipid IV(A) biosynthesis; lipid IV(A) from (3R)-3-hydroxytetradecanoyl-[acyl-carrier-protein] and UDP-N-acetyl-alpha-D-glucosamine: step 2/6. In terms of biological role, catalyzes the hydrolysis of UDP-3-O-myristoyl-N-acetylglucosamine to form UDP-3-O-myristoylglucosamine and acetate, the committed step in lipid A biosynthesis. The polypeptide is UDP-3-O-acyl-N-acetylglucosamine deacetylase (Geotalea uraniireducens (strain Rf4) (Geobacter uraniireducens)).